The sequence spans 393 residues: S-adenosylmethionine sensor upstream of mTORC1 (393 aa).

The disordered stretch occupies residues 1–35 (MDLRSSAETDPDLSENHPGSVPAELQSRKQEQEKL). Arg-94 provides a ligand contact to S-adenosyl-L-methionine. The segment at 118-141 (DEKSARHATAGNANTDTNAPPQLS) is disordered. Residues 125–136 (ATAGNANTDTNA) are compositionally biased toward low complexity. The S-adenosyl-L-methionine site is built by Gly-160, Asp-178, Asp-190, Phe-191, and Ser-232. The segment at 362–393 (ELPETPYDSDSGESQSSSAPFYELEDPILLQS) is disordered.

Belongs to the BMT2/SAMTOR family. As to quaternary structure, interacts with the GATOR1 complex; interaction is disrupted when samtor binds S-adenosyl-L-methionine. Interacts with the KICSTOR complex; interaction is disrupted when bmt2/samtor binds S-adenosyl-L-methionine.

Functionally, S-adenosyl-L-methionine-binding protein that acts as an inhibitor of mTORC1 signaling via interaction with the GATOR1 and KICSTOR complexes. Acts as a sensor of S-adenosyl-L-methionine to signal methionine sufficiency to mTORC1: in presence of methionine, binds S-adenosyl-L-methionine, leading to disrupt interaction with the GATOR1 and KICSTOR complexes and promote mTORC1 signaling. Upon methionine starvation, S-adenosyl-L-methionine levels are reduced, thereby promoting the association with GATOR1 and KICSTOR, leading to inhibit mTORC1 signaling. Probably also acts as a S-adenosyl-L-methionine-dependent methyltransferase. The protein is S-adenosylmethionine sensor upstream of mTORC1 of Danio rerio (Zebrafish).